The following is a 769-amino-acid chain: Signal transducer and activator of transcription 3.1 (769 aa).

The Essential for nuclear import signature appears at 150–162; sequence DVRKKVQDLEQKM. Residues 580–670 enclose the SH2 domain; that stretch reads WNEGYIMGFI…DATNILVSPL (91 aa). The residue at position 728 (Ser-728) is a Phosphoserine; by NLK.

Belongs to the transcription factor STAT family. As to quaternary structure, forms a homodimer or a heterodimer with a related family member, such as stat1. Interacts with nlk.2. Phosphorylation of both tyrosine and serine residues, together with dimerization, is required for mesoderm induction.

The protein resides in the cytoplasm. The protein localises to the nucleus. Functionally, transcription factor that binds to target promoter sequences and activates transcription upon il6st/gp130 stimulation. Mediates ventralization of embryos, at least in part via inhibition of smad2 signaling. Required for hairy2 to induce dll1/delta1 and promote neural crest cell proliferation and differentiation. Involved in TGFbeta-mediated mesoderm induction in early embryos, acting downstream of map3k7/tak1 and nlk.2. In Xenopus laevis (African clawed frog), this protein is Signal transducer and activator of transcription 3.1 (stat3.1).